A 490-amino-acid polypeptide reads, in one-letter code: UDP-N-acetylmuramoyl-L-alanyl-D-glutamate--2,6-diaminopimelate ligase (490 aa).

UDP-N-acetyl-alpha-D-muramoyl-L-alanyl-D-glutamate is bound at residue S31. Residue 109–115 (GTNGKTS) participates in ATP binding. Residues N150, 151–152 (TT), S178, and R186 each bind UDP-N-acetyl-alpha-D-muramoyl-L-alanyl-D-glutamate. The residue at position 218 (K218) is an N6-carboxylysine. Meso-2,6-diaminopimelate is bound by residues R384, 408–411 (DNPR), G458, and E462. The Meso-diaminopimelate recognition motif signature appears at 408–411 (DNPR).

It belongs to the MurCDEF family. MurE subfamily. Mg(2+) serves as cofactor. Post-translationally, carboxylation is probably crucial for Mg(2+) binding and, consequently, for the gamma-phosphate positioning of ATP.

The protein resides in the cytoplasm. It carries out the reaction UDP-N-acetyl-alpha-D-muramoyl-L-alanyl-D-glutamate + meso-2,6-diaminopimelate + ATP = UDP-N-acetyl-alpha-D-muramoyl-L-alanyl-gamma-D-glutamyl-meso-2,6-diaminopimelate + ADP + phosphate + H(+). It participates in cell wall biogenesis; peptidoglycan biosynthesis. Functionally, catalyzes the addition of meso-diaminopimelic acid to the nucleotide precursor UDP-N-acetylmuramoyl-L-alanyl-D-glutamate (UMAG) in the biosynthesis of bacterial cell-wall peptidoglycan. The polypeptide is UDP-N-acetylmuramoyl-L-alanyl-D-glutamate--2,6-diaminopimelate ligase (Bacillus velezensis (strain DSM 23117 / BGSC 10A6 / LMG 26770 / FZB42) (Bacillus amyloliquefaciens subsp. plantarum)).